Reading from the N-terminus, the 104-residue chain is Large ribosomal subunit protein uL24 (104 aa).

Belongs to the universal ribosomal protein uL24 family. As to quaternary structure, part of the 50S ribosomal subunit.

Its function is as follows. One of two assembly initiator proteins, it binds directly to the 5'-end of the 23S rRNA, where it nucleates assembly of the 50S subunit. Functionally, one of the proteins that surrounds the polypeptide exit tunnel on the outside of the subunit. This chain is Large ribosomal subunit protein uL24, found in Anaplasma phagocytophilum (strain HZ).